The chain runs to 154 residues: NADPH-dependent 7-cyano-7-deazaguanine reductase (154 aa).

Cysteine 54 (thioimide intermediate) is an active-site residue. Residue aspartate 61 is the Proton donor of the active site. Substrate contacts are provided by residues 76-78 (VES) and 95-96 (HE).

The protein belongs to the GTP cyclohydrolase I family. QueF type 1 subfamily.

The protein resides in the cytoplasm. The enzyme catalyses 7-aminomethyl-7-carbaguanine + 2 NADP(+) = 7-cyano-7-deazaguanine + 2 NADPH + 3 H(+). The protein operates within tRNA modification; tRNA-queuosine biosynthesis. Catalyzes the NADPH-dependent reduction of 7-cyano-7-deazaguanine (preQ0) to 7-aminomethyl-7-deazaguanine (preQ1). The protein is NADPH-dependent 7-cyano-7-deazaguanine reductase of Porphyromonas gingivalis (strain ATCC 33277 / DSM 20709 / CIP 103683 / JCM 12257 / NCTC 11834 / 2561).